Here is a 419-residue protein sequence, read N- to C-terminus: Zinc finger protein Pegasus (419 aa).

Residue Lys5 forms a Glycyl lysine isopeptide (Lys-Gly) (interchain with G-Cter in SUMO2) linkage. 3 C2H2-type zinc fingers span residues 82–104, 110–132, and 138–161; these read LKCR…IRIH, HRCH…MRSH, and YKCE…RRKH. Residue Lys185 forms a Glycyl lysine isopeptide (Lys-Gly) (interchain with G-Cter in SUMO2) linkage. A compositionally biased stretch (polar residues) spans 223–236; that stretch reads QTDSYESMAKTTPT. Disordered regions lie at residues 223 to 245 and 288 to 356; these read QTDS…DPQE and MQQP…PTLP. The segment covering 289–311 has biased composition (low complexity); sequence QQPSAQAVVSAVSASLPQSSSPA. A compositionally biased stretch (polar residues) spans 332-349; the sequence is SEPSAHTSTPSMGNSQPS. 2 C2H2-type zinc fingers span residues 364 to 386 and 392 to 416; these read HHCQ…MGCH and FQCN…RGQH.

Belongs to the Ikaros C2H2-type zinc-finger protein family. As to quaternary structure, self-associates. Interacts with other family members; IKZF1, IKZF2, IKZF3 and IKZF4.

The protein localises to the nucleus. Its function is as follows. Transcriptional repressor that binds the core 5'GNNTGTNG-3' DNA consensus sequence. Involved in megakaryocyte differentiation. This Bos taurus (Bovine) protein is Zinc finger protein Pegasus (IKZF5).